Here is a 790-residue protein sequence, read N- to C-terminus: Exocyst complex component SEC15A (790 aa).

A coiled-coil region spans residues 49–70; it reads LVHQLKNVARKKEAEIEDLCKT.

The protein belongs to the SEC15 family. In terms of assembly, the exocyst complex is composed of SEC3, SEC5, SEC6, SEC8, SEC10, EXO70A1 and EXO84B.

The protein resides in the cytoplasm. It is found in the cytosol. In terms of biological role, component of the exocyst complex involved in the docking of exocytic vesicles with fusion sites on the plasma membrane during regulated or polarized secretion. Involved in polarized cell growth and organ morphogenesis. During cytokinesis, involved in cell plate initiation, cell plate maturation and formation of new primary cell wall. The sequence is that of Exocyst complex component SEC15A (SEC15A) from Arabidopsis thaliana (Mouse-ear cress).